The primary structure comprises 289 residues: Ribosomal protein L11 methyltransferase (289 aa).

4 residues coordinate S-adenosyl-L-methionine: threonine 142, glycine 163, aspartate 185, and asparagine 226.

Belongs to the methyltransferase superfamily. PrmA family.

The protein localises to the cytoplasm. It catalyses the reaction L-lysyl-[protein] + 3 S-adenosyl-L-methionine = N(6),N(6),N(6)-trimethyl-L-lysyl-[protein] + 3 S-adenosyl-L-homocysteine + 3 H(+). Its function is as follows. Methylates ribosomal protein L11. The polypeptide is Ribosomal protein L11 methyltransferase (Legionella pneumophila subsp. pneumophila (strain Philadelphia 1 / ATCC 33152 / DSM 7513)).